The primary structure comprises 197 residues: Probable GTP-binding protein EngB (197 aa).

Positions 26–197 constitute an EngB-type G domain; the sequence is ELPEIALAGR…EAWDAILEKL (172 aa). GTP is bound by residues 34-41, 61-65, 79-82, 146-149, and 178-180; these read GRSNVGKS, GKTQL, DVPG, TKAD, and FSS. Mg(2+)-binding residues include Ser41 and Thr63.

It belongs to the TRAFAC class TrmE-Era-EngA-EngB-Septin-like GTPase superfamily. EngB GTPase family. The cofactor is Mg(2+).

In terms of biological role, necessary for normal cell division and for the maintenance of normal septation. This chain is Probable GTP-binding protein EngB, found in Streptococcus pneumoniae (strain CGSP14).